The following is a 132-amino-acid chain: NAD(P) transhydrogenase subunit alpha part 2 (132 aa).

Transmembrane regions (helical) follow at residues 43-63, 72-92, and 103-123; these read PLVF…YVVW, PLMS…MIAI, and LLGS…FIVT.

In terms of assembly, complex of an alpha and a beta chain; in Rickettsia, the alpha chain seems to be made of two subunits.

It is found in the cell inner membrane. The catalysed reaction is NAD(+) + NADPH + H(+)(in) = NADH + NADP(+) + H(+)(out). In terms of biological role, the transhydrogenation between NADH and NADP is coupled to respiration and ATP hydrolysis and functions as a proton pump across the membrane. The sequence is that of NAD(P) transhydrogenase subunit alpha part 2 (pntAB) from Rickettsia prowazekii (strain Madrid E).